A 189-amino-acid chain; its full sequence is Shikimate kinase (189 aa).

22–27 (ASGKST) provides a ligand contact to ATP. Ser26 is a binding site for Mg(2+). Substrate-binding residues include Asp44, Arg68, and Gly90. Residue Arg128 coordinates ATP. A substrate-binding site is contributed by Arg147.

This sequence belongs to the shikimate kinase family. As to quaternary structure, monomer. The cofactor is Mg(2+).

It localises to the cytoplasm. It carries out the reaction shikimate + ATP = 3-phosphoshikimate + ADP + H(+). Its pathway is metabolic intermediate biosynthesis; chorismate biosynthesis; chorismate from D-erythrose 4-phosphate and phosphoenolpyruvate: step 5/7. In terms of biological role, catalyzes the specific phosphorylation of the 3-hydroxyl group of shikimic acid using ATP as a cosubstrate. This chain is Shikimate kinase, found in Synechococcus sp. (strain JA-3-3Ab) (Cyanobacteria bacterium Yellowstone A-Prime).